Consider the following 339-residue polypeptide: MKLDFKHLTQFKDIIELDKRPVKLDERETFNVSWGIDENYQVGAAISIASILENNKQNKFTFHIIADYLDKEYIELLSQLATKYQTVIKLYLIDSEPLKALPQSNIWPVSIYYRLLSFDYFSARLDSLLYLDADIVCKGSLNELIALEFKDEYGAVVIDVDAMQSKSAERLCNEDFNGSYFNSGVMYINLREWLKQRLTEKFFDLLSDESIIKKLKYPDQDILNLMFLHHAKILPRKYNCIYTIKSEFEEKNSEYYTRFINDDTVFIHYTGITKPWHDWANYASADYFRNIYNISPWRNIPYKKAVKKHEHKEKYKHLLYQKKFLDGVFTAIKYNVMKG.

UDP is bound by residues 35–40 (GIDENY) and 132–133 (DA). Asp132 and Asp134 together coordinate Mg(2+). 2 consecutive short sequence motifs (DXD) follow at residues 132 to 134 (DAD) and 219 to 221 (DQD). His268 is a binding site for Mg(2+). Position 268–274 (268–274 (HYTGITK)) interacts with UDP.

Belongs to the glycosyltransferase 8 family. Mg(2+) is required as a cofactor.

It is found in the cell inner membrane. It carries out the reaction UDP-glucose + [lipopolysaccharide] = UDP + D-glucosyl-[lipopolysaccharide].. It participates in bacterial outer membrane biogenesis; LPS core biosynthesis. Glucosyltransferase involved in the biosynthesis of the core oligosaccharide region of lipopolysaccharide (LPS). Catalyzes the addition of a glucose (glucose II) to the outer-core galactose I. Has a marked preference for its specific donor substrate, but it appears to have a relaxed specificity for alternate LPS acceptor residues, providing the overall size of the acceptor is conserved. This Escherichia coli protein is Lipopolysaccharide 1,2-glucosyltransferase.